The chain runs to 137 residues: Small ribosomal subunit protein uS9c (137 aa).

It belongs to the universal ribosomal protein uS9 family.

The protein resides in the plastid. It localises to the chloroplast. In Chlorella vulgaris (Green alga), this protein is Small ribosomal subunit protein uS9c (rps9).